The chain runs to 66 residues: Large ribosomal subunit protein bL35 (66 aa).

This sequence belongs to the bacterial ribosomal protein bL35 family.

This Methylobacterium nodulans (strain LMG 21967 / CNCM I-2342 / ORS 2060) protein is Large ribosomal subunit protein bL35.